Reading from the N-terminus, the 125-residue chain is Monothiol glutaredoxin-S2 (125 aa).

The Glutaredoxin domain maps to Ala-28–Cys-124. Cys-48 contacts [2Fe-2S] cluster.

Belongs to the glutaredoxin family. CC-type subfamily.

The protein resides in the cytoplasm. Its function is as follows. May only reduce GSH-thiol disulfides, but not protein disulfides. The chain is Monothiol glutaredoxin-S2 (GRXS2) from Oryza sativa subsp. japonica (Rice).